Reading from the N-terminus, the 168-residue chain is Large ribosomal subunit protein uL10 (168 aa).

The protein belongs to the universal ribosomal protein uL10 family. Part of the ribosomal stalk of the 50S ribosomal subunit. The N-terminus interacts with L11 and the large rRNA to form the base of the stalk. The C-terminus forms an elongated spine to which L12 dimers bind in a sequential fashion forming a multimeric L10(L12)X complex.

Functionally, forms part of the ribosomal stalk, playing a central role in the interaction of the ribosome with GTP-bound translation factors. The chain is Large ribosomal subunit protein uL10 from Lacticaseibacillus casei (strain BL23) (Lactobacillus casei).